A 118-amino-acid chain; its full sequence is Putative pterin-4-alpha-carbinolamine dehydratase (118 aa).

Belongs to the pterin-4-alpha-carbinolamine dehydratase family.

It catalyses the reaction (4aS,6R)-4a-hydroxy-L-erythro-5,6,7,8-tetrahydrobiopterin = (6R)-L-erythro-6,7-dihydrobiopterin + H2O. This chain is Putative pterin-4-alpha-carbinolamine dehydratase, found in Pseudomonas entomophila (strain L48).